Reading from the N-terminus, the 168-residue chain is MAVKIKLQRLGKIRTPHYRVVVADARTKRDGKVIENIGIYEPKQDPSVIKIDSERAQYWLSVGAQPTESVAALLKVTGDWQKFKGIEGAEGTLRVAEEKPSKLDLFNQALSEANNGPTAEAITEKKKKAREEKEAKEAAEKAAAEKAAAAEAEASEEAPAEEAASEEA.

A disordered region spans residues 110–168 (LSEANNGPTAEAITEKKKKAREEKEAKEAAEKAAAEKAAAAEAEASEEAPAEEAASEEA). Residues 129-144 (AREEKEAKEAAEKAAA) show a composition bias toward basic and acidic residues. Residues 153–168 (EASEEAPAEEAASEEA) are compositionally biased toward acidic residues.

The protein belongs to the bacterial ribosomal protein bS16 family.

The sequence is that of Small ribosomal subunit protein bS16 from Corynebacterium efficiens (strain DSM 44549 / YS-314 / AJ 12310 / JCM 11189 / NBRC 100395).